The sequence spans 139 residues: Peptide methionine sulfoxide reductase B5 (139 aa).

Ala-2 carries the post-translational modification N-acetylalanine. The region spanning 12–133 is the MsrB domain; it reads EEEWRAVLSP…NSVSISFNPA (122 aa). Residues Cys-51, Cys-54, Cys-97, and Cys-100 each coordinate Zn(2+). Cysteines 69 and 122 form a disulfide. Cys-122 (nucleophile) is an active-site residue.

Belongs to the MsrB Met sulfoxide reductase family. Zn(2+) serves as cofactor.

It localises to the cytoplasm. It is found in the cytosol. It carries out the reaction L-methionyl-[protein] + [thioredoxin]-disulfide + H2O = L-methionyl-(R)-S-oxide-[protein] + [thioredoxin]-dithiol. Its function is as follows. Catalyzes the reduction of methionine sulfoxide (MetSO) to methionine in proteins. Plays a protective role against oxidative stress by restoring activity to proteins that have been inactivated by methionine oxidation. MSRB family specifically reduces the MetSO R-enantiomer. The polypeptide is Peptide methionine sulfoxide reductase B5 (MSRB5) (Arabidopsis thaliana (Mouse-ear cress)).